Reading from the N-terminus, the 163-residue chain is ATP synthase subunit delta, mitochondrial (163 aa).

A mitochondrion-targeting transit peptide spans 1–18; it reads MLARTIQRFSVVAKRGYA.

Belongs to the ATPase epsilon chain family. In terms of assembly, subunit of the F-type ATPase which has 2 components, CF(1) - the catalytic core - and CF(0) - the membrane proton channel.

Its subcellular location is the mitochondrion. It is found in the mitochondrion inner membrane. Its function is as follows. Mitochondrial membrane ATP synthase (F(1)F(0) ATP synthase or Complex V) produces ATP from ADP in the presence of a proton gradient across the membrane which is generated by electron transport complexes of the respiratory chain. F-type ATPases consist of two structural domains, F(1) - containing the extramembraneous catalytic core, and F(0) - containing the membrane proton channel, linked together by a central stalk and a peripheral stalk. During catalysis, ATP turnover in the catalytic domain of F(1) is coupled via a rotary mechanism of the central stalk subunits to proton translocation. Part of the complex F(1) domain and of the central stalk which is part of the complex rotary element. The protein is ATP synthase subunit delta, mitochondrial of Caenorhabditis elegans.